The sequence spans 284 residues: Nucleotide-binding protein TTE1834 (284 aa).

Residue Gly-8–Thr-15 coordinates ATP. A GTP-binding site is contributed by Asp-58–Gly-61.

Belongs to the RapZ-like family.

Functionally, displays ATPase and GTPase activities. The sequence is that of Nucleotide-binding protein TTE1834 from Caldanaerobacter subterraneus subsp. tengcongensis (strain DSM 15242 / JCM 11007 / NBRC 100824 / MB4) (Thermoanaerobacter tengcongensis).